Reading from the N-terminus, the 64-residue chain is DNA gyrase inhibitor YacG (64 aa).

Zn(2+) is bound by residues cysteine 10, cysteine 13, cysteine 29, and cysteine 33.

The protein belongs to the DNA gyrase inhibitor YacG family. In terms of assembly, interacts with GyrB. Zn(2+) is required as a cofactor.

Its function is as follows. Inhibits all the catalytic activities of DNA gyrase by preventing its interaction with DNA. Acts by binding directly to the C-terminal domain of GyrB, which probably disrupts DNA binding by the gyrase. This is DNA gyrase inhibitor YacG from Pectobacterium carotovorum subsp. carotovorum (strain PC1).